The sequence spans 233 residues: 2,3,4,5-tetrahydropyridine-2,6-dicarboxylate N-acetyltransferase (233 aa).

It belongs to the transferase hexapeptide repeat family. DapH subfamily.

The enzyme catalyses (S)-2,3,4,5-tetrahydrodipicolinate + acetyl-CoA + H2O = L-2-acetamido-6-oxoheptanedioate + CoA. The protein operates within amino-acid biosynthesis; L-lysine biosynthesis via DAP pathway; LL-2,6-diaminopimelate from (S)-tetrahydrodipicolinate (acetylase route): step 1/3. In terms of biological role, catalyzes the transfer of an acetyl group from acetyl-CoA to tetrahydrodipicolinate. The chain is 2,3,4,5-tetrahydropyridine-2,6-dicarboxylate N-acetyltransferase from Petrotoga mobilis (strain DSM 10674 / SJ95).